The primary structure comprises 712 residues: 3',5'-cyclic-AMP phosphodiesterase 4C (712 aa).

Disordered regions lie at residues 1–31 and 45–64; these read MENLGVGEGAEACSRLSRSRGRHSMTRAPKH and RFYSDPDKSAGCRERDLSPR. A compositionally biased stretch (basic residues) spans 17-31; the sequence is SRSRGRHSMTRAPKH. Residues 48–64 show a composition bias toward basic and acidic residues; that stretch reads SDPDKSAGCRERDLSPR. Serine 73 carries the phosphoserine modification. A disordered region spans residues 181 to 200; it reads AKQGPVGNPSSSNQLPPAED. A PDEase domain is found at 312–641; the sequence is VQTDQEEQLA…EWYQSKIPRS (330 aa). Catalysis depends on histidine 388, which acts as the Proton donor. Histidine 388 is a 3',5'-cyclic AMP binding site. Positions 388 and 392 each coordinate AMP. Zn(2+) contacts are provided by histidine 392, histidine 428, aspartate 429, and aspartate 546. The AMP site is built by aspartate 429, aspartate 546, glutamine 597, and phenylalanine 600. Aspartate 429 is a Mg(2+) binding site. A Mn(2+)-binding site is contributed by aspartate 429. 3',5'-cyclic AMP contacts are provided by glutamine 597 and phenylalanine 600. Disordered regions lie at residues 636 to 655 and 664 to 712; these read SKIPRSPSDLTNPERDGPDR and EAEE…NQRT. At serine 641 the chain carries Phosphoserine. Residues 664–678 are compositionally biased toward acidic residues; that stretch reads EAEEEDEEEEEEGEE.

This sequence belongs to the cyclic nucleotide phosphodiesterase family. PDE4 subfamily. In terms of assembly, part of a complex containing AKAP5, ADCY5, ADCY6 and PKD2. Zn(2+) serves as cofactor. It depends on Mg(2+) as a cofactor. Mn(2+) is required as a cofactor. In terms of tissue distribution, expressed in various tissues but not in cells of the immune system.

The protein resides in the cell projection. It is found in the cilium. The catalysed reaction is 3',5'-cyclic AMP + H2O = AMP + H(+). Its pathway is purine metabolism; 3',5'-cyclic AMP degradation; AMP from 3',5'-cyclic AMP: step 1/1. With respect to regulation, inhibited by rolipram. Its function is as follows. Hydrolyzes the second messenger cAMP, which is a key regulator of many important physiological processes. The sequence is that of 3',5'-cyclic-AMP phosphodiesterase 4C from Homo sapiens (Human).